The following is a 380-amino-acid chain: Bifunctional dihydropteroate synthase/dihydropteroate reductase (380 aa).

The interval 1–104 is dihydropteroate reductase; the sequence is MIVKRLNPDA…SQPFGLKHLA (104 aa). The dihydropteroate synthase stretch occupies residues 105-380; the sequence is QELKSHLKAP…KVFKSLEETD (276 aa). The Pterin-binding domain maps to 119–371; sequence PQIMAVLNLT…DIDEHIDLIK (253 aa). N126 serves as a coordination point for Mg(2+). (7,8-dihydropterin-6-yl)methyl diphosphate-binding positions include D202, N221, D289, K325, and 359-361; that span reads RVH.

It in the C-terminal section; belongs to the DHPS family. It depends on FAD as a cofactor. The cofactor is FMN. Mg(2+) serves as cofactor.

It carries out the reaction (7,8-dihydropterin-6-yl)methyl diphosphate + 4-aminobenzoate = 7,8-dihydropteroate + diphosphate. It catalyses the reaction (6S)-5,6,7,8-tetrahydropteroate + NAD(+) = 7,8-dihydropteroate + NADH + H(+). The protein operates within cofactor biosynthesis; tetrahydrofolate biosynthesis; 7,8-dihydrofolate from 2-amino-4-hydroxy-6-hydroxymethyl-7,8-dihydropteridine diphosphate and 4-aminobenzoate: step 1/2. Functionally, bifunctional enzyme that catalyzes the formation of dihydropteroate, the immediate precursor of folic acid and the reduction of dihydropteroate to tetrahydropteroate. In Helicobacter pylori (strain ATCC 700392 / 26695) (Campylobacter pylori), this protein is Bifunctional dihydropteroate synthase/dihydropteroate reductase.